Here is a 232-residue protein sequence, read N- to C-terminus: Phosphoribosylformylglycinamidine synthase subunit PurQ (232 aa).

Residues lysine 2–phenylalanine 232 form the Glutamine amidotransferase type-1 domain. Cysteine 86 acts as the Nucleophile in catalysis. Active-site residues include histidine 203 and glutamate 205.

Part of the FGAM synthase complex composed of 1 PurL, 1 PurQ and 2 PurS subunits.

It localises to the cytoplasm. The enzyme catalyses N(2)-formyl-N(1)-(5-phospho-beta-D-ribosyl)glycinamide + L-glutamine + ATP + H2O = 2-formamido-N(1)-(5-O-phospho-beta-D-ribosyl)acetamidine + L-glutamate + ADP + phosphate + H(+). It carries out the reaction L-glutamine + H2O = L-glutamate + NH4(+). The protein operates within purine metabolism; IMP biosynthesis via de novo pathway; 5-amino-1-(5-phospho-D-ribosyl)imidazole from N(2)-formyl-N(1)-(5-phospho-D-ribosyl)glycinamide: step 1/2. In terms of biological role, part of the phosphoribosylformylglycinamidine synthase complex involved in the purines biosynthetic pathway. Catalyzes the ATP-dependent conversion of formylglycinamide ribonucleotide (FGAR) and glutamine to yield formylglycinamidine ribonucleotide (FGAM) and glutamate. The FGAM synthase complex is composed of three subunits. PurQ produces an ammonia molecule by converting glutamine to glutamate. PurL transfers the ammonia molecule to FGAR to form FGAM in an ATP-dependent manner. PurS interacts with PurQ and PurL and is thought to assist in the transfer of the ammonia molecule from PurQ to PurL. The chain is Phosphoribosylformylglycinamidine synthase subunit PurQ from Methanosarcina barkeri (strain Fusaro / DSM 804).